We begin with the raw amino-acid sequence, 263 residues long: uncharacterized protein (263 aa).

A coiled-coil region spans residues 72–168 (LDKKETKELS…RTIVEIRNTK (97 aa)). Residues 76–158 (ETKELSKKEK…EKKEKKEKED (83 aa)) form a disordered region. Basic residues predominate over residues 83–95 (KEKKQLKKEKKAL). Residues 96–107 (KKENKGGKDKKD) are compositionally biased toward basic and acidic residues. Basic residues predominate over residues 108-121 (KKDKKDKKDKKDKK). Composition is skewed to basic and acidic residues over residues 122 to 131 (DKKDKGDKKD) and 139 to 158 (KHDDDKSEVKEKKEKKEKED).

This is an uncharacterized protein from Dictyostelium discoideum (Social amoeba).